The chain runs to 276 residues: Protein PXR1 (276 aa).

The segment at 1-23 (MGLAGTKIKQRFGNDPRNTNWSN) is disordered. The 47-residue stretch at 25 to 71 (TSRFGHQYLAKMGWQQGSGLGLVSHALTTHVKVSIKDDNLGLGAKLH) folds into the G-patch domain. Over residues 152 to 172 (DDGKKSRKRKADESETKEDKK) the composition is skewed to basic and acidic residues. The interval 152–261 (DDGKKSRKRK…SKWIKQKRAS (110 aa)) is disordered. The segment covering 173-218 (TLKKHKKEKKDKKEKKEKKKKKEKKDKKDKKDKKNKKDKKDKKDKK) has biased composition (basic residues). Over residues 219–228 (DKKDKIRTGS) the composition is skewed to basic and acidic residues. Residues 229-239 (DETLVSKESSA) are compositionally biased toward polar residues.

It belongs to the PINX1 family.

It is found in the nucleus. Its subcellular location is the nucleolus. Involved in rRNA-processing at A0, A1 and A2 sites and negatively regulates telomerase. The protein is Protein PXR1 (PXR1) of Candida albicans (strain SC5314 / ATCC MYA-2876) (Yeast).